We begin with the raw amino-acid sequence, 192 residues long: GTP cyclohydrolase 1 (192 aa).

Zn(2+) contacts are provided by Cys81, His84, and Cys153.

It belongs to the GTP cyclohydrolase I family. As to quaternary structure, toroid-shaped homodecamer, composed of two pentamers of five dimers.

It carries out the reaction GTP + H2O = 7,8-dihydroneopterin 3'-triphosphate + formate + H(+). It participates in cofactor biosynthesis; 7,8-dihydroneopterin triphosphate biosynthesis; 7,8-dihydroneopterin triphosphate from GTP: step 1/1. In Streptococcus mutans serotype c (strain ATCC 700610 / UA159), this protein is GTP cyclohydrolase 1.